Reading from the N-terminus, the 274-residue chain is MDLFMRFFTLGSITAQPVKIDNASPASTVHATATIPLQASLPFGWLVIGVAFLAVFQSATKIIALNKRWQLALYKGFQFICNLLLLFVTIYSHLLLVAAGMEAQFLYLYALIYFLQCINACRIIMRCWLCWKCKSKNPLLYDANYFVCWHTHNYDYCIPYNSVTDTIVVTEGDGISTPKLKEDYQIGGYSEDRHSGVKDYVVVHGYFTEVYYQLESTQITTDTGIENATFFIFNKLVKDPPNVQIHTIDGSSGVANPAMDPIYDEPTTTTSVPL.

Residues 1–34 lie on the Extracellular side of the membrane; sequence MDLFMRFFTLGSITAQPVKIDNASPASTVHATAT. O-linked (GalNAc...) serine; by host glycosylation is present at Ser-27. Thr-28, Thr-32, and Thr-34 each carry an O-linked (GalNAc...) threonine; by host glycan. In terms of domain architecture, CoV 3a-like viroporin TM spans 33 to 141; that stretch reads ATIPLQASLP…KCKSKNPLLY (109 aa). A helical transmembrane segment spans residues 35 to 55; sequence IPLQASLPFGWLVIGVAFLAV. The Cytoplasmic portion of the chain corresponds to 56 to 78; the sequence is FQSATKIIALNKRWQLALYKGFQ. A helical membrane pass occupies residues 79 to 99; the sequence is FICNLLLLFVTIYSHLLLVAA. Residues 100–104 are Extracellular-facing; the sequence is GMEAQ. A helical transmembrane segment spans residues 105 to 125; that stretch reads FLYLYALIYFLQCINACRIIM. The Cytoplasmic segment spans residues 126–274; it reads RCWLCWKCKS…EPTTTTSVPL (149 aa). A CoV 3a-like viroporin CD domain is found at 145-237; that stretch reads YFVCWHTHNY…ATFFIFNKLV (93 aa).

In terms of assembly, homotetramer composed of two homodimers linked non covalently. Interacts with M, S and E proteins. Also interacts with the accessory protein 7a. Exists in both O-glycosylated and non-glycosylated forms. The glycosylated form is associated with the virion.

It localises to the virion. It is found in the host Golgi apparatus membrane. The protein localises to the host cell membrane. The protein resides in the secreted. Its subcellular location is the host cytoplasm. Functionally, forms homotetrameric potassium sensitive ion channels (viroporin) and may modulate virus release. Up-regulates expression of fibrinogen subunits FGA, FGB and FGG in host lung epithelial cells. Induces apoptosis in cell culture. Down-regulates the type 1 interferon receptor by inducing serine phosphorylation within the IFN alpha-receptor subunit 1 (IFNAR1) degradation motif and increasing IFNAR1 ubiquitination. This Homo sapiens (Human) protein is ORF3a protein.